Here is a 321-residue protein sequence, read N- to C-terminus: tRNA dimethylallyltransferase (321 aa).

25–32 is an ATP binding site; sequence GPTASGKS. 27-32 contributes to the substrate binding site; the sequence is TASGKS. An interaction with substrate tRNA region spans residues 50–53; it reads DSMQ.

This sequence belongs to the IPP transferase family. In terms of assembly, monomer. It depends on Mg(2+) as a cofactor.

It carries out the reaction adenosine(37) in tRNA + dimethylallyl diphosphate = N(6)-dimethylallyladenosine(37) in tRNA + diphosphate. Its function is as follows. Catalyzes the transfer of a dimethylallyl group onto the adenine at position 37 in tRNAs that read codons beginning with uridine, leading to the formation of N6-(dimethylallyl)adenosine (i(6)A). The sequence is that of tRNA dimethylallyltransferase from Rhodopseudomonas palustris (strain ATCC BAA-98 / CGA009).